Consider the following 190-residue polypeptide: MAEKTQKSVKIAPGAVVCVESEIRGDVTIGPRTVIHPKARIIAEAGPIVIGEGNLIEEQALIINAYPDNITPDTEDPEPKPMIIGTNNVFEVGCYSQAMKMGDNNVIESKAYVGRNVILTSGCIIGACCNLNTFEVIPENTVIYGADCLRRVQTERPQPQTLQLDFLMKILPNYHHLKKTMKGSSTPVKN.

T186 carries the post-translational modification Phosphothreonine; by CDK1.

It belongs to the dynactin subunits 5/6 family. Dynactin subunit 6 subfamily. As to quaternary structure, subunit of dynactin, a multiprotein complex part of a tripartite complex with dynein and a adapter, such as BICDL1, BICD2 or HOOK3. The dynactin complex is built around ACTR1A/ACTB filament and consists of an actin-related filament composed of a shoulder domain, a pointed end and a barbed end. Its length is defined by its flexible shoulder domain. The soulder is composed of 2 DCTN1 subunits, 4 DCTN2 and 2 DCTN3. The 4 DCNT2 (via N-terminus) bind the ACTR1A filament and act as molecular rulers to determine the length. The pointed end is important for binding dynein-dynactin cargo adapters. Consists of 4 subunits: ACTR10, DCNT4, DCTN5 and DCTN6. Within the complex DCTN6 forms a heterodimer with DCTN5. The barbed end is composed of a CAPZA1:CAPZB heterodimers, which binds ACTR1A/ACTB filament and dynactin and stabilizes dynactin. Interacts with PLK1. Interacts with N4BP2L1. In terms of processing, phosphorylation at Thr-186 by CDK1 during mitotic prometaphase creates a binding site for PLK1 that facilitates its recruitment to kinetochores. As to expression, ubiquitous.

The protein localises to the cytoplasm. It localises to the cytoskeleton. It is found in the chromosome. The protein resides in the centromere. Its subcellular location is the kinetochore. Part of the dynactin complex that activates the molecular motor dynein for ultra-processive transport along microtubules. This chain is Dynactin subunit 6, found in Homo sapiens (Human).